A 77-amino-acid chain; its full sequence is Conotoxin Lt7.1 (77 aa).

Positions 1-19 (MEKLTILLLVAALLMSTQG) are cleaved as a signal peptide. Positions 20 to 49 (LIQSGGENRPKEKIKFLSKRKTVAESWWEG) are excised as a propeptide. Disulfide bonds link cysteine 51-cysteine 65, cysteine 58-cysteine 69, and cysteine 64-cysteine 74.

Belongs to the conotoxin O2 superfamily. In terms of tissue distribution, expressed by the venom duct.

Its subcellular location is the secreted. The protein is Conotoxin Lt7.1 of Conus litteratus (Lettered cone).